A 93-amino-acid chain; its full sequence is Large ribosomal subunit protein eL42 (93 aa).

Cys-11, Cys-14, Cys-71, and Cys-74 together coordinate Zn(2+). Residues 11–74 (CRYCGKHTLH…VNIRFRCTEC (64 aa)) form a C4-type zinc finger.

This sequence belongs to the eukaryotic ribosomal protein eL42 family. Part of the 50S ribosomal subunit. Zn(2+) serves as cofactor.

Binds to the 23S rRNA. This is Large ribosomal subunit protein eL42 from Archaeoglobus fulgidus (strain ATCC 49558 / DSM 4304 / JCM 9628 / NBRC 100126 / VC-16).